Here is a 217-residue protein sequence, read N- to C-terminus: Oxygen-evolving enhancer protein 3-1, chloroplastic (217 aa).

The transit peptide at 1 to 68 (MAQAMASMTG…GGALSQAARA (68 aa)) directs the protein to the chloroplast.

It belongs to the PsbQ family.

It localises to the plastid. Its subcellular location is the chloroplast thylakoid membrane. This is Oxygen-evolving enhancer protein 3-1, chloroplastic (PSBQ1) from Zea mays (Maize).